We begin with the raw amino-acid sequence, 365 residues long: MTITGIIAEFNPFHNGHKYLLDQAEGLKIVAMSGNFMQRGEPAIVDKWTRAQMALENGADLVVELPFLVSVQAADFFGQGAVDILDRLGIDSLVFGTEEVRDYQKIADLYTEKGAEMEKFVENLPDSLSYPQKTQAMWKEFAGLDFSGNTPNHVLALAYAKAVAGRNIKLHPIQRQGAGYHSVNKDVDFASATALRQHQKDQDFLERFMPSVALFEQASKVIWEDYFPLLRYQILSNPDLTTIYQVNQEMAVRIKEAIKTAQSVEELVELVTTKRYTKARVRRLLSYILVQARESNLPEAIHVLGFTEKGRQHLKSLKGQVSLVSRIGKEPWDAMTQKADQIYQLGKPSIAEQNFGRVPIRIETN.

Residues 7–20 (IAEF…HKYL), G96, N152, and R175 contribute to the ATP site.

Belongs to the TmcAL family.

The protein localises to the cytoplasm. It carries out the reaction cytidine(34) in elongator tRNA(Met) + acetate + ATP = N(4)-acetylcytidine(34) in elongator tRNA(Met) + AMP + diphosphate. Catalyzes the formation of N(4)-acetylcytidine (ac(4)C) at the wobble position of elongator tRNA(Met), using acetate and ATP as substrates. First activates an acetate ion to form acetyladenylate (Ac-AMP) and then transfers the acetyl group to tRNA to form ac(4)C34. The polypeptide is tRNA(Met) cytidine acetate ligase (Streptococcus pneumoniae (strain Hungary19A-6)).